The following is a 347-amino-acid chain: GMP reductase (347 aa).

108–131 (ADFDKMKQILALSPALKFICIDVA) lines the NADP(+) pocket. The K(+) site is built by Gly-181 and Gly-183. The active-site Thioimidate intermediate is the Cys-186. 216–239 (IVSDGGCSVPGDVAKAFGGGADFV) contacts NADP(+).

The protein belongs to the IMPDH/GMPR family. GuaC type 1 subfamily. As to quaternary structure, homotetramer.

It carries out the reaction IMP + NH4(+) + NADP(+) = GMP + NADPH + 2 H(+). Its function is as follows. Catalyzes the irreversible NADPH-dependent deamination of GMP to IMP. It functions in the conversion of nucleobase, nucleoside and nucleotide derivatives of G to A nucleotides, and in maintaining the intracellular balance of A and G nucleotides. The chain is GMP reductase from Yersinia enterocolitica serotype O:8 / biotype 1B (strain NCTC 13174 / 8081).